The following is a 489-amino-acid chain: MALTKPDVDVLVVGGGLGGLSTALFLARRGARVLLVERHASTSVLPKAAGQNPRTMELFRFGGVADEILATDDIRGAQGDFTIKVVERVGGRVPAQLRESFEELVGATEQCTPMPWALAPQDRVEPVLVAHAAKHGAEIRFATELTSFQAGDDGVTARLRDLGTGAESTVSARYLVAADGPRSAIRESLGITRHGHGTLAHFMGVIFEADLTAVVPPGSTGWYYLQHPDFTGTFGPTDRPNRHTFYVRYDPERGERPEDYTPQRCTELIRLAVDAPGLVPDILDIQAWDMAAYIADRWREGPVLLVGDAAKVTPPTGGMGGNTAIGHGFDVAWKLAAVLRGEAGERLLDSYGADGSLVSRLVVDESLAIYAQRMAPHLLGSVPEERGTAQVVLGFRYRSTAVAAEDDDPEPTEDPRRPSGRPGFRAPHVWIEQDGTRRSTVELFGDCWVLLAAPEGGAWGQAAARAARIWASASTSISSAAMSPPPPAN.

Residues 17–18, Glu-37, Gln-121, and Leu-145 each bind FAD; that span reads LG. Catalysis depends on Tyr-224, which acts as the Proton acceptor. Asp-308 is a binding site for FAD. Gly-317 serves as a coordination point for aklavinone. The segment at 402–428 is disordered; the sequence is VAAEDDDPEPTEDPRRPSGRPGFRAPH.

Belongs to the PheA/TfdB FAD monooxygenase family. As to quaternary structure, monomer. The cofactor is FAD.

It carries out the reaction aklavinone + NADPH + O2 + H(+) = epsilon-rhodomycinone + NADP(+) + H2O. It participates in antibiotic biosynthesis; daunorubicin biosynthesis. The protein operates within antibiotic biosynthesis; carminomycin biosynthesis. It functions in the pathway antibiotic biosynthesis; rhodomycin biosynthesis. Its pathway is antibiotic biosynthesis; doxorubicin biosynthesis. In terms of biological role, involved in the biosynthesis of the anthracyclines carminomycin, rhodomycin, daunorubicin (daunomycin) and doxorubicin (adriamycin) which are aromatic polyketide antibiotics that exhibit high cytotoxicity and are widely applied in the chemotherapy of a variety of cancers. Catalyzes the incorporation of a hydroxyl group at position C-11 of aklavinone, resulting in epsilon-rhodomycinone. The chain is Aklavinone 12-hydroxylase DnrF (dnrF) from Streptomyces peucetius subsp. caesius.